Here is a 1412-residue protein sequence, read N- to C-terminus: uncharacterized protein (1412 aa).

The tract at residues 1-22 (MESINVVNSVEDLPGFNPDENV) is disordered. Coiled-coil stretches lie at residues 317 to 377 (NNDF…ILRH) and 732 to 800 (SKEA…SDDE). The interval 778–808 (SRKRKHEDIVKEHEAEKRDSDDEDDFEEVDV) is disordered. Residues 783–797 (HEDIVKEHEAEKRDS) show a composition bias toward basic and acidic residues. The span at 798–808 (DDEDDFEEVDV) shows a compositional bias: acidic residues.

This is an uncharacterized protein from Magallana gigas (Pacific oyster).